Reading from the N-terminus, the 1257-residue chain is Insulin receptor substrate 4 (1257 aa).

The PH domain occupies 78-199 (EVCKRGYLRK…WYLLLSRLIL (122 aa)). The IRS-type PTB domain occupies 231–335 (YKDVWQVIVK…EKMRALCADE (105 aa)). Disordered stretches follow at residues 406 to 653 (VAHS…GGRF), 678 to 921 (IPEG…SSDY), and 1179 to 1257 (QDVA…KRGR). Over residues 408 to 424 (HSRRGRLHLPRGRRSRR) the composition is skewed to basic residues. Positions 487-490 (YMPM) match the YXXM motif 1 motif. Residues 495-509 (SGNGRGSGGGQGSNG) are compositionally biased toward gly residues. Residues 510–524 (QGSSSHSSGGNQCSG) show a composition bias toward low complexity. Gly residues-rich tracts occupy residues 525–542 (EGQGSRGGQGSNGQGSGG) and 551–599 (GTAG…SGKG). Residues 627–640 (MPPPPPPPPPPPPA) show a composition bias toward pro residues. The span at 641–650 (GGTGGKGKSG) shows a compositional bias: gly residues. Residues 678 to 800 (IPEGAARGPH…KNPRNPQGGS (123 aa)) are CRK-binding. Short sequence motifs (YXXM motif) lie at residues 700–703 (YVPM), 717–720 (YMPM), and 743–746 (YMMM). The span at 750–761 (VSPPPAPSPPKA) shows a compositional bias: pro residues. Residues 763-774 (DTNKEDDSKDND) are compositionally biased toward basic and acidic residues. Positions 779-782 (YMFM) match the YXXM motif 5 motif. Positions 800 to 810 (SSSKSWSSYFS) are enriched in low complexity. The segment covering 815-826 (FRSSPLGQNDNS) has biased composition (polar residues). Positions 828–831 (YVPM) match the YXXM motif 6 motif. Positions 840–855 (GLDKEVSYNWDPKDAA) are enriched in basic and acidic residues. The GRB2-binding stretch occupies residues 895-897 (ITK). Residue tyrosine 921 is modified to Phosphotyrosine. Positions 921–924 (YVNM) match the YXXM motif 7 motif. Residues 1236–1257 (DTHVRMDFARRDNQFDSPKRGR) are compositionally biased toward basic and acidic residues.

Interacts with SOCS6 in response to stimulation with either insulin or IGF1. Interacts with CRK and CRKL. Interaction with CRK is stronger than with CRKL. Interacts with CRK via the phosphorylated YXXM motifs. Interacts with GRB2 and PIK3R1. Interacts with PLC-gamma, SHC1, PTK6, PPP4C and NISCH. Interacts with ASB4; this interaction promotes IRS4 proteasomal degradation. Post-translationally, phosphorylated on tyrosine residues in response to both insulin and IGF1 signaling. Phosphorylated on Tyr-921 in response to FGF2 signaling. Phosphorylation of Tyr-921 is required for GRB2, phospholipase C-gamma and phosphatidylinositol 3-kinase interaction. Ubiquitinated in a ASB4-dependent manner, leading to proteasomal degradation. As to expression, expressed in myoblasts. Expressed in liver and hepatocellular carcinoma.

Its subcellular location is the cell membrane. Its function is as follows. Acts as an interface between multiple growth factor receptors possessing tyrosine kinase activity, such as insulin receptor, IGF1R and FGFR1, and a complex network of intracellular signaling molecules containing SH2 domains. Involved in the IGF1R mitogenic signaling pathway. Promotes the AKT1 signaling pathway and BAD phosphorylation during insulin stimulation without activation of RPS6KB1 or the inhibition of apoptosis. Interaction with GRB2 enhances insulin-stimulated mitogen-activated protein kinase activity. May be involved in nonreceptor tyrosine kinase signaling in myoblasts. Plays a pivotal role in the proliferation/differentiation of hepatoblastoma cell through EPHB2 activation upon IGF1 stimulation. May play a role in the signal transduction in response to insulin and to a lesser extent in response to IL4 and GH on mitogenesis. Plays a role in growth, reproduction and glucose homeostasis. May act as negative regulators of the IGF1 signaling pathway by suppressing the function of IRS1 and IRS2. This chain is Insulin receptor substrate 4 (IRS4), found in Homo sapiens (Human).